We begin with the raw amino-acid sequence, 27 residues long: NADH-ubiquinone oxidoreductase chain 1 (27 aa).

The chain crosses the membrane as a helical span at residues 3–23; that stretch reads LIFPLVGSLLLVICVMVGVAF.

It belongs to the complex I subunit 1 family.

Its subcellular location is the mitochondrion inner membrane. It catalyses the reaction a ubiquinone + NADH + 5 H(+)(in) = a ubiquinol + NAD(+) + 4 H(+)(out). Its function is as follows. Core subunit of the mitochondrial membrane respiratory chain NADH dehydrogenase (Complex I) that is believed to belong to the minimal assembly required for catalysis. Complex I functions in the transfer of electrons from NADH to the respiratory chain. The immediate electron acceptor for the enzyme is believed to be ubiquinone. The sequence is that of NADH-ubiquinone oxidoreductase chain 1 (ND1) from Simulium vittatum (Striped black fly).